We begin with the raw amino-acid sequence, 582 residues long: A-type ATP synthase subunit A 1 (582 aa).

An ATP-binding site is contributed by 231–238; that stretch reads GPFGSGKT.

It belongs to the ATPase alpha/beta chains family. As to quaternary structure, has multiple subunits with at least A(3), B(3), C, D, E, F, H, I and proteolipid K(x).

It is found in the cell membrane. It carries out the reaction ATP + H2O + 4 H(+)(in) = ADP + phosphate + 5 H(+)(out). In terms of biological role, component of the A-type ATP synthase that produces ATP from ADP in the presence of a proton gradient across the membrane. The A chain is the catalytic subunit. This is A-type ATP synthase subunit A 1 from Methanospirillum hungatei JF-1 (strain ATCC 27890 / DSM 864 / NBRC 100397 / JF-1).